A 163-amino-acid chain; its full sequence is Developmental pluripotency-associated protein 3 (163 aa).

In terms of tissue distribution, preferentially expressed in oocyte.

The protein localises to the nucleus. Its subcellular location is the cytoplasm. In terms of biological role, primordial germ cell (PGCs)-specific protein involved in epigenetic chromatin reprogramming in the zygote following fertilization. In zygotes, DNA demethylation occurs selectively in the paternal pronucleus before the first cell division, while the adjacent maternal pronucleus and certain paternally-imprinted loci are protected from this process. Participates in protection of DNA methylation in the maternal pronucleus by preventing conversion of 5mC to 5hmC: specifically recognizes and binds histone H3 dimethylated at 'Lys-9' (H3K9me2) on maternal genome, and protects maternal genome from TET3-mediated conversion to 5hmC and subsequent DNA demethylation. Does not bind paternal chromatin, which is mainly packed into protamine and does not contain much H3K9me2 mark. Also protects imprinted loci that are marked with H3K9me2 in mature sperm from DNA demethylation in early embryogenesis. May be important for the totipotent/pluripotent states continuing through preimplantation development. Also involved in chromatin condensation in oocytogenesis. The polypeptide is Developmental pluripotency-associated protein 3 (DPPA3) (Bos taurus (Bovine)).